We begin with the raw amino-acid sequence, 232 residues long: Large ribosomal subunit protein uL16m (232 aa).

The transit peptide at 1 to 41 (MFPYLTRMNLSIKMGGLTLKESSPNAFLNNTTIARRFKHEY) directs the protein to the mitochondrion.

It belongs to the universal ribosomal protein uL16 family. In terms of assembly, component of the mitochondrial large ribosomal subunit (mt-LSU). Mature yeast 74S mitochondrial ribosomes consist of a small (37S) and a large (54S) subunit. The 37S small subunit contains a 15S ribosomal RNA (15S mt-rRNA) and 34 different proteins. The 54S large subunit contains a 21S rRNA (21S mt-rRNA) and 46 different proteins.

The protein resides in the mitochondrion. Functionally, component of the mitochondrial ribosome (mitoribosome), a dedicated translation machinery responsible for the synthesis of mitochondrial genome-encoded proteins, including at least some of the essential transmembrane subunits of the mitochondrial respiratory chain. The mitoribosomes are attached to the mitochondrial inner membrane and translation products are cotranslationally integrated into the membrane. The sequence is that of Large ribosomal subunit protein uL16m (MRPL16) from Saccharomyces cerevisiae (strain ATCC 204508 / S288c) (Baker's yeast).